Here is a 91-residue protein sequence, read N- to C-terminus: Probable Fe(2+)-trafficking protein (91 aa).

The protein belongs to the Fe(2+)-trafficking protein family.

In terms of biological role, could be a mediator in iron transactions between iron acquisition and iron-requiring processes, such as synthesis and/or repair of Fe-S clusters in biosynthetic enzymes. This is Probable Fe(2+)-trafficking protein from Actinobacillus pleuropneumoniae serotype 5b (strain L20).